The primary structure comprises 158 residues: MTVEKSYYMTQEGKDKLEEELHYLKTDRRQEVVERIKVARDFGDLSENSEYDAAKDEQAFVEQRITQVEKMIRNAVIIENDNDNPNIVSLGKSVSFVELPDGDEETYTIVGSAEADPFEGKISNDSPMATSLLGKEIGEEVTVTTPGGDIDVRITNVE.

Positions 47-75 form a coiled coil; that stretch reads ENSEYDAAKDEQAFVEQRITQVEKMIRNA.

Belongs to the GreA/GreB family.

Its function is as follows. Necessary for efficient RNA polymerase transcription elongation past template-encoded arresting sites. The arresting sites in DNA have the property of trapping a certain fraction of elongating RNA polymerases that pass through, resulting in locked ternary complexes. Cleavage of the nascent transcript by cleavage factors such as GreA or GreB allows the resumption of elongation from the new 3'terminus. GreA releases sequences of 2 to 3 nucleotides. In Oceanobacillus iheyensis (strain DSM 14371 / CIP 107618 / JCM 11309 / KCTC 3954 / HTE831), this protein is Transcription elongation factor GreA.